A 352-amino-acid chain; its full sequence is Divinyl chlorophyll a/b light-harvesting protein PcbH (352 aa).

6 helical membrane passes run 27–47, 88–108, 140–160, 202–222, 242–262, and 309–329; these read FIGSHVGHTGIICFATGASCL, VATIAIFHLIFSMVYGGAGLA, FILGHHLIFLGVANIWFVEWA, VMSGHAFLAFLQISGGAFHIA, AVLSWSLAGLFLMGVVAAFWA, and LVNVQYYFAFFCLQGHLWHAL.

It belongs to the PsbB/PsbC family. IsiA/Pcb subfamily. The antenna complex consists of divinyl chlorophylls (a and b) and divinyl chlorophyll a/b binding proteins and binds more divinyl chlorophyll b than does the antenna complex from high-light-adapted Prochlorococcus. Requires divinyl chlorophyll a as cofactor. The cofactor is divinyl chlorophyll b.

The protein localises to the cellular thylakoid membrane. Its function is as follows. The antenna complex functions as a light receptor, it captures and delivers excitation energy to photosystems II and I. The Prochlorales pcb genes are not related to higher plant LHCs. This Prochlorococcus marinus (strain SARG / CCMP1375 / SS120) protein is Divinyl chlorophyll a/b light-harvesting protein PcbH (pcbH).